Here is a 378-residue protein sequence, read N- to C-terminus: Quinolinate synthase (378 aa).

Iminosuccinate-binding residues include histidine 59 and serine 80. A [4Fe-4S] cluster-binding site is contributed by cysteine 125. Iminosuccinate contacts are provided by residues 151 to 153 and serine 168; that span reads YAN. [4Fe-4S] cluster is bound at residue cysteine 212. Iminosuccinate is bound by residues 238–240 and threonine 255; that span reads HPE. Cysteine 309 contacts [4Fe-4S] cluster.

The protein belongs to the quinolinate synthase family. Type 1 subfamily. The cofactor is [4Fe-4S] cluster.

The protein localises to the cytoplasm. It carries out the reaction iminosuccinate + dihydroxyacetone phosphate = quinolinate + phosphate + 2 H2O + H(+). It participates in cofactor biosynthesis; NAD(+) biosynthesis; quinolinate from iminoaspartate: step 1/1. Functionally, catalyzes the condensation of iminoaspartate with dihydroxyacetone phosphate to form quinolinate. The chain is Quinolinate synthase from Burkholderia thailandensis (strain ATCC 700388 / DSM 13276 / CCUG 48851 / CIP 106301 / E264).